Reading from the N-terminus, the 157-residue chain is Small ribosomal subunit protein uS7 (157 aa).

The protein belongs to the universal ribosomal protein uS7 family. As to quaternary structure, part of the 30S ribosomal subunit. Contacts proteins S9 and S11.

Functionally, one of the primary rRNA binding proteins, it binds directly to 16S rRNA where it nucleates assembly of the head domain of the 30S subunit. Is located at the subunit interface close to the decoding center, probably blocks exit of the E-site tRNA. This chain is Small ribosomal subunit protein uS7, found in Marinomonas sp. (strain MWYL1).